Consider the following 313-residue polypeptide: Ribosomal RNA small subunit methyltransferase I (313 aa).

Positions 1 to 23 are disordered; sequence MASIQLARTTRGGDGVARADGTR.

It belongs to the methyltransferase superfamily. RsmI family.

The protein localises to the cytoplasm. The enzyme catalyses cytidine(1402) in 16S rRNA + S-adenosyl-L-methionine = 2'-O-methylcytidine(1402) in 16S rRNA + S-adenosyl-L-homocysteine + H(+). Its function is as follows. Catalyzes the 2'-O-methylation of the ribose of cytidine 1402 (C1402) in 16S rRNA. This chain is Ribosomal RNA small subunit methyltransferase I, found in Micromonospora olivasterospora.